The primary structure comprises 629 residues: 1-deoxy-D-xylulose-5-phosphate synthase (629 aa).

Residues H85 and 126–128 contribute to the thiamine diphosphate site; that span reads GHS. D157 contacts Mg(2+). Thiamine diphosphate-binding positions include 158–159, N186, Y293, and E373; that span reads GS. N186 is a Mg(2+) binding site.

The protein belongs to the transketolase family. DXPS subfamily. In terms of assembly, homodimer. Mg(2+) is required as a cofactor. The cofactor is thiamine diphosphate.

It catalyses the reaction D-glyceraldehyde 3-phosphate + pyruvate + H(+) = 1-deoxy-D-xylulose 5-phosphate + CO2. The protein operates within metabolic intermediate biosynthesis; 1-deoxy-D-xylulose 5-phosphate biosynthesis; 1-deoxy-D-xylulose 5-phosphate from D-glyceraldehyde 3-phosphate and pyruvate: step 1/1. Functionally, catalyzes the acyloin condensation reaction between C atoms 2 and 3 of pyruvate and glyceraldehyde 3-phosphate to yield 1-deoxy-D-xylulose-5-phosphate (DXP). This chain is 1-deoxy-D-xylulose-5-phosphate synthase, found in Helicobacter hepaticus (strain ATCC 51449 / 3B1).